The sequence spans 256 residues: MIIGIDIGNTHIVTGIYDNNGELISTFRIATNDKMTEDEYFSYFNNITKYNEISIKKVDAILISSVVPNIIITFQFFARKYFKVEATIVDLEKKLPFTFAKGINYTGFGADRIIDITEAMQKYPDKNLVIFDFGTATTYDVLKKGVYIGGGILPGIDMSINALYGNTAKLPRVKFTTPSSVLGTDTMKQIQAAIFFGYAGQIKHIIKKINEELNEEIFVLATGGLGKILSAEIDEIDEYDANLSLKGLYTLYKLNK.

6–13 (DIGNTHIV) serves as a coordination point for ATP. 109–112 (GADR) provides a ligand contact to substrate. D111 acts as the Proton acceptor in catalysis. D132 contacts K(+). T135 provides a ligand contact to ATP. T186 contributes to the substrate binding site.

This sequence belongs to the type III pantothenate kinase family. Homodimer. Requires NH4(+) as cofactor. K(+) is required as a cofactor.

The protein resides in the cytoplasm. The enzyme catalyses (R)-pantothenate + ATP = (R)-4'-phosphopantothenate + ADP + H(+). It functions in the pathway cofactor biosynthesis; coenzyme A biosynthesis; CoA from (R)-pantothenate: step 1/5. Its function is as follows. Catalyzes the phosphorylation of pantothenate (Pan), the first step in CoA biosynthesis. The chain is Type III pantothenate kinase from Fusobacterium nucleatum subsp. nucleatum (strain ATCC 25586 / DSM 15643 / BCRC 10681 / CIP 101130 / JCM 8532 / KCTC 2640 / LMG 13131 / VPI 4355).